A 510-amino-acid chain; its full sequence is Inositol-3-phosphate synthase 1 (510 aa).

Positions 70, 71, 72, 73, 143, 180, 190, 193, 230, 231, 232, 233, 281, 282, 306, 309, 340, 341, 342, 355, 393, 394, 422, and 423 each coordinate NAD(+).

The protein belongs to the myo-inositol 1-phosphate synthase family. The cofactor is NAD(+).

The protein resides in the cytoplasm. It is found in the cytosol. The protein localises to the nucleus. The catalysed reaction is D-glucose 6-phosphate = 1D-myo-inositol 3-phosphate. It functions in the pathway polyol metabolism; myo-inositol biosynthesis; myo-inositol from D-glucose 6-phosphate: step 1/2. Key enzyme in myo-inositol biosynthesis pathway that catalyzes the conversion of glucose 6-phosphate to 1-myo-inositol 1-phosphate in a NAD-dependent manner. May play a role in oxidative stress resistance and influences ascorbate levels. The chain is Inositol-3-phosphate synthase 1 from Populus euphratica (Euphrates poplar).